Reading from the N-terminus, the 182-residue chain is Adenine phosphoribosyltransferase (182 aa).

Belongs to the purine/pyrimidine phosphoribosyltransferase family. In terms of assembly, homodimer.

It is found in the cytoplasm. It carries out the reaction AMP + diphosphate = 5-phospho-alpha-D-ribose 1-diphosphate + adenine. The protein operates within purine metabolism; AMP biosynthesis via salvage pathway; AMP from adenine: step 1/1. Its function is as follows. Catalyzes a salvage reaction resulting in the formation of AMP, that is energically less costly than de novo synthesis. The polypeptide is Adenine phosphoribosyltransferase (Koribacter versatilis (strain Ellin345)).